The chain runs to 80 residues: Putative ATP-dependent Clp protease proteolytic subunit (80 aa).

The active site involves H19.

It belongs to the peptidase S14 family. Component of the chloroplastic Clp protease core complex.

The protein localises to the plastid. Its subcellular location is the chloroplast. It catalyses the reaction Hydrolysis of proteins to small peptides in the presence of ATP and magnesium. alpha-casein is the usual test substrate. In the absence of ATP, only oligopeptides shorter than five residues are hydrolyzed (such as succinyl-Leu-Tyr-|-NHMec, and Leu-Tyr-Leu-|-Tyr-Trp, in which cleavage of the -Tyr-|-Leu- and -Tyr-|-Trp bonds also occurs).. Cleaves peptides in various proteins in a process that requires ATP hydrolysis. Has a chymotrypsin-like activity. Plays a major role in the degradation of misfolded proteins. This Pinus strobus (Eastern white pine) protein is Putative ATP-dependent Clp protease proteolytic subunit.